The sequence spans 275 residues: Diaminopimelate epimerase (275 aa).

Positions 13, 46, and 66 each coordinate substrate. Cys-75 serves as the catalytic Proton donor. Substrate-binding positions include 76–77, Asn-159, Asn-192, and 210–211; these read GN and ER. Cys-219 acts as the Proton acceptor in catalysis. Position 220–221 (220–221) interacts with substrate; sequence GT.

The protein belongs to the diaminopimelate epimerase family. In terms of assembly, homodimer.

It is found in the cytoplasm. It carries out the reaction (2S,6S)-2,6-diaminopimelate = meso-2,6-diaminopimelate. It functions in the pathway amino-acid biosynthesis; L-lysine biosynthesis via DAP pathway; DL-2,6-diaminopimelate from LL-2,6-diaminopimelate: step 1/1. Catalyzes the stereoinversion of LL-2,6-diaminopimelate (L,L-DAP) to meso-diaminopimelate (meso-DAP), a precursor of L-lysine and an essential component of the bacterial peptidoglycan. The sequence is that of Diaminopimelate epimerase from Psychromonas ingrahamii (strain DSM 17664 / CCUG 51855 / 37).